The primary structure comprises 336 residues: D-aspartate oxidase (336 aa).

FAD-binding residues include glutamate 34, lysine 35, threonine 41, serine 42, glycine 304, valine 308, and serine 309. The Microbody targeting signal signature appears at 334–336 (SKL).

It belongs to the DAMOX/DASOX family. In terms of assembly, monomer. FAD is required as a cofactor.

Its subcellular location is the peroxisome matrix. The catalysed reaction is D-aspartate + O2 + H2O = oxaloacetate + H2O2 + NH4(+). The enzyme catalyses D-glutamate + O2 + H2O = H2O2 + 2-oxoglutarate + NH4(+). In terms of biological role, selectively catalyzes the oxidative deamination of acidic amino acids. Suppresses the level of D-aspartate in the brain, an amino acid that can act as an agonist for glutamate receptors. Protects the organism from the toxicity of D-amino acids. May also function in the intestine. This is D-aspartate oxidase from Octopus vulgaris (Common octopus).